The primary structure comprises 192 residues: Large ribosomal subunit protein uL10 (192 aa).

It belongs to the universal ribosomal protein uL10 family. As to quaternary structure, part of the ribosomal stalk of the 50S ribosomal subunit. The N-terminus interacts with L11 and the large rRNA to form the base of the stalk. The C-terminus forms an elongated spine to which L12 dimers bind in a sequential fashion forming a multimeric L10(L12)X complex.

Forms part of the ribosomal stalk, playing a central role in the interaction of the ribosome with GTP-bound translation factors. The protein is Large ribosomal subunit protein uL10 of Gloeobacter violaceus (strain ATCC 29082 / PCC 7421).